A 217-amino-acid chain; its full sequence is Cytidylate kinase (217 aa).

ATP is bound at residue 9–17; the sequence is GPAASGKSS.

This sequence belongs to the cytidylate kinase family. Type 1 subfamily.

Its subcellular location is the cytoplasm. It carries out the reaction CMP + ATP = CDP + ADP. The catalysed reaction is dCMP + ATP = dCDP + ADP. The protein is Cytidylate kinase of Bdellovibrio bacteriovorus (strain ATCC 15356 / DSM 50701 / NCIMB 9529 / HD100).